Consider the following 316-residue polypeptide: 4-hydroxy-3-methylbut-2-enyl diphosphate reductase (316 aa).

Residue C12 participates in [4Fe-4S] cluster binding. The (2E)-4-hydroxy-3-methylbut-2-enyl diphosphate site is built by H43 and H81. Positions 43 and 81 each coordinate dimethylallyl diphosphate. Positions 43 and 81 each coordinate isopentenyl diphosphate. Residue C103 participates in [4Fe-4S] cluster binding. H131 contributes to the (2E)-4-hydroxy-3-methylbut-2-enyl diphosphate binding site. H131 lines the dimethylallyl diphosphate pocket. H131 is a binding site for isopentenyl diphosphate. E133 acts as the Proton donor in catalysis. A (2E)-4-hydroxy-3-methylbut-2-enyl diphosphate-binding site is contributed by T170. Residue C198 participates in [4Fe-4S] cluster binding. Residues S226, N228, and S271 each coordinate (2E)-4-hydroxy-3-methylbut-2-enyl diphosphate. Residues S226, N228, and S271 each contribute to the dimethylallyl diphosphate site. S226, N228, and S271 together coordinate isopentenyl diphosphate.

The protein belongs to the IspH family. It depends on [4Fe-4S] cluster as a cofactor.

The enzyme catalyses isopentenyl diphosphate + 2 oxidized [2Fe-2S]-[ferredoxin] + H2O = (2E)-4-hydroxy-3-methylbut-2-enyl diphosphate + 2 reduced [2Fe-2S]-[ferredoxin] + 2 H(+). The catalysed reaction is dimethylallyl diphosphate + 2 oxidized [2Fe-2S]-[ferredoxin] + H2O = (2E)-4-hydroxy-3-methylbut-2-enyl diphosphate + 2 reduced [2Fe-2S]-[ferredoxin] + 2 H(+). It functions in the pathway isoprenoid biosynthesis; dimethylallyl diphosphate biosynthesis; dimethylallyl diphosphate from (2E)-4-hydroxy-3-methylbutenyl diphosphate: step 1/1. Its pathway is isoprenoid biosynthesis; isopentenyl diphosphate biosynthesis via DXP pathway; isopentenyl diphosphate from 1-deoxy-D-xylulose 5-phosphate: step 6/6. Functionally, catalyzes the conversion of 1-hydroxy-2-methyl-2-(E)-butenyl 4-diphosphate (HMBPP) into a mixture of isopentenyl diphosphate (IPP) and dimethylallyl diphosphate (DMAPP). Acts in the terminal step of the DOXP/MEP pathway for isoprenoid precursor biosynthesis. In Bacillus mycoides (strain KBAB4) (Bacillus weihenstephanensis), this protein is 4-hydroxy-3-methylbut-2-enyl diphosphate reductase.